A 201-amino-acid polypeptide reads, in one-letter code: Sec-independent protein translocase protein TatB (201 aa).

The helical transmembrane segment at 1–21 (MLDLGWSEILVIAVVLIVVVG) threads the bilayer. A disordered region spans residues 96–201 (LSEAAKAKPA…RRKKTAGTAP (106 aa)). Low complexity-rich tracts occupy residues 102–114 (AKPAASSLPAADS) and 159–187 (TSAKQAAPKAKAAAAAKAPTKNTASAPAK). Basic residues predominate over residues 189 to 201 (PSPRRKKTAGTAP).

It belongs to the TatB family. In terms of assembly, the Tat system comprises two distinct complexes: a TatABC complex, containing multiple copies of TatA, TatB and TatC subunits, and a separate TatA complex, containing only TatA subunits. Substrates initially bind to the TatABC complex, which probably triggers association of the separate TatA complex to form the active translocon.

Its subcellular location is the cell inner membrane. Functionally, part of the twin-arginine translocation (Tat) system that transports large folded proteins containing a characteristic twin-arginine motif in their signal peptide across membranes. Together with TatC, TatB is part of a receptor directly interacting with Tat signal peptides. TatB may form an oligomeric binding site that transiently accommodates folded Tat precursor proteins before their translocation. In Chelativorans sp. (strain BNC1), this protein is Sec-independent protein translocase protein TatB.